The chain runs to 84 residues: Protein SlyX homolog (84 aa).

The protein belongs to the SlyX family.

In Mannheimia succiniciproducens (strain KCTC 0769BP / MBEL55E), this protein is Protein SlyX homolog.